The sequence spans 92 residues: Toxin RelE3 (92 aa).

This sequence belongs to the RelE toxin family.

Functionally, toxic component of a type II toxin-antitoxin (TA) system. Its toxic effect is neutralized by coexpression with cognate antitoxin RelB3 but no other ParD or RelB antitoxin. In Caulobacter vibrioides (strain ATCC 19089 / CIP 103742 / CB 15) (Caulobacter crescentus), this protein is Toxin RelE3 (relE3).